The following is a 327-amino-acid chain: Arabinose 5-phosphate isomerase KdsD (327 aa).

One can recognise an SIS domain in the interval 41–183 (ILENNRDKSR…AIALLKAKNF (143 aa)). Substrate is bound by residues 74 to 75 (GT), His-81, His-87, 113 to 122 (GLLPMIKHLD), 147 to 149 (HVD), Thr-221, and Glu-273. Residue His-81 coordinates Zn(2+). One can recognise a CBS 1 domain in the interval 209–268 (MRKGNEIPIVKPTDNIRKAILEISDKGVGNTLVAENNTLLGIFTDGDLRRMFEAESFNSQ). The CBS 2 domain occupies 275-327 (MTKNPKSISKEEMAITALEKMEKYEITSLAVVDNGHNILGIVTMHDLIKLELR).

It belongs to the SIS family. GutQ/KpsF subfamily. As to quaternary structure, homotetramer.

The catalysed reaction is D-arabinose 5-phosphate = D-ribulose 5-phosphate. It participates in carbohydrate biosynthesis; 3-deoxy-D-manno-octulosonate biosynthesis; 3-deoxy-D-manno-octulosonate from D-ribulose 5-phosphate: step 1/3. It functions in the pathway bacterial outer membrane biogenesis; lipopolysaccharide biosynthesis. Inhibited by hydroxamates, mimicking the putative enediol reaction intermediate. Most potent inhibition, with an IC(50) of 0.7 uM, is obtained with the 4 carbon-based hydroxamate containing acetyl moieties. Functionally, involved in the biosynthesis of 3-deoxy-D-manno-octulosonate (KDO), a unique 8-carbon sugar component of lipopolysaccharides (LPSs). Catalyzes the reversible aldol-ketol isomerization between D-ribulose 5-phosphate (Ru5P) and D-arabinose 5-phosphate (A5P). This chain is Arabinose 5-phosphate isomerase KdsD (kdsD), found in Francisella tularensis subsp. tularensis (strain SCHU S4 / Schu 4).